Reading from the N-terminus, the 330-residue chain is UPF0353 protein MAP_3434 (330 aa).

Transmembrane regions (helical) follow at residues 21 to 41 (GMLL…VVQA) and 63 to 83 (LPIA…ATPT). One can recognise a VWFA domain in the interval 94-289 (VIMLVIDMSQ…GELQKSYNAI (196 aa)). A helical membrane pass occupies residues 304-324 (AGWLRLGVLTALIATALALLI).

This sequence belongs to the UPF0353 family.

Its subcellular location is the cell membrane. The sequence is that of UPF0353 protein MAP_3434 from Mycolicibacterium paratuberculosis (strain ATCC BAA-968 / K-10) (Mycobacterium paratuberculosis).